Here is a 92-residue protein sequence, read N- to C-terminus: DNA/RNA-binding protein Alba (92 aa).

At Lys-11 the chain carries N6-acetyllysine.

Belongs to the histone-like Alba family. Acetylated. Acetylation at Lys-11 decreases DNA-binding affinity.

It is found in the cytoplasm. Its subcellular location is the chromosome. Its function is as follows. Binds double-stranded DNA tightly but without sequence specificity. Involved in DNA compaction. This chain is DNA/RNA-binding protein Alba, found in Pyrobaculum neutrophilum (strain DSM 2338 / JCM 9278 / NBRC 100436 / V24Sta) (Thermoproteus neutrophilus).